A 468-amino-acid chain; its full sequence is MHDIKWIRDEPVGLITALVRRGGGSDEAKSAAEKLVAYLIGLDEQRRRTLTDLEGKLARRNAASKEIGQAKAQKDEERASRLMAEVANLKADIPTLEALAKDWEKSLDNALAAIPNAPLAEVPPGADEHDNVEKSRFGVARSYAFTPKQHFEVGEALGQMDFETAAKLSGARFVVNKGPLARLERALGQFFLDVHTGEHGYMEVNPPLLVRDDAMFGTAQLPKFREDQFFVNTVDGIEAISAETKGFETFSDEFKSKLTEAMSYQGRWLIPTAEVPLTNLVRESILSEEELPLRLTACTPCFRAEAGAAGRDTRGMIRQHQFTKVELVSITTPEKSAEEHERMLACAEAVLKKLDLHYRVVTLCTGDMGFASQKTYDIEVWLPGQGAFREISSCSVCGDFQARRMNARYRPAEGKGPRFVHTLNGSGVAVGRALVAVLETYQQENGAVTVPDALLPYMGGLKTIEKLK.

272-274 is a binding site for L-serine; the sequence is TAE. 303 to 305 is an ATP binding site; that stretch reads RAE. E326 contacts L-serine. ATP is bound at residue 390 to 393; it reads EISS. S426 is an L-serine binding site.

The protein belongs to the class-II aminoacyl-tRNA synthetase family. Type-1 seryl-tRNA synthetase subfamily. Homodimer. The tRNA molecule binds across the dimer.

It is found in the cytoplasm. The enzyme catalyses tRNA(Ser) + L-serine + ATP = L-seryl-tRNA(Ser) + AMP + diphosphate + H(+). The catalysed reaction is tRNA(Sec) + L-serine + ATP = L-seryl-tRNA(Sec) + AMP + diphosphate + H(+). It functions in the pathway aminoacyl-tRNA biosynthesis; selenocysteinyl-tRNA(Sec) biosynthesis; L-seryl-tRNA(Sec) from L-serine and tRNA(Sec): step 1/1. Catalyzes the attachment of serine to tRNA(Ser). Is also able to aminoacylate tRNA(Sec) with serine, to form the misacylated tRNA L-seryl-tRNA(Sec), which will be further converted into selenocysteinyl-tRNA(Sec). The protein is Serine--tRNA ligase of Xanthobacter autotrophicus (strain ATCC BAA-1158 / Py2).